A 305-amino-acid polypeptide reads, in one-letter code: UDP-3-O-acyl-N-acetylglucosamine deacetylase (305 aa).

3 residues coordinate Zn(2+): His79, His238, and Asp242. His265 acts as the Proton donor in catalysis.

This sequence belongs to the LpxC family. Zn(2+) is required as a cofactor.

The catalysed reaction is a UDP-3-O-[(3R)-3-hydroxyacyl]-N-acetyl-alpha-D-glucosamine + H2O = a UDP-3-O-[(3R)-3-hydroxyacyl]-alpha-D-glucosamine + acetate. Its pathway is glycolipid biosynthesis; lipid IV(A) biosynthesis; lipid IV(A) from (3R)-3-hydroxytetradecanoyl-[acyl-carrier-protein] and UDP-N-acetyl-alpha-D-glucosamine: step 2/6. Its function is as follows. Catalyzes the hydrolysis of UDP-3-O-myristoyl-N-acetylglucosamine to form UDP-3-O-myristoylglucosamine and acetate, the committed step in lipid A biosynthesis. The polypeptide is UDP-3-O-acyl-N-acetylglucosamine deacetylase (Klebsiella pneumoniae subsp. pneumoniae (strain ATCC 700721 / MGH 78578)).